Consider the following 340-residue polypeptide: Guanine nucleotide-binding protein subunit beta-1 (340 aa).

S29 is modified (phosphoserine). WD repeat units lie at residues 53–92 (GHLA…KVHA), 95–134 (LRSS…GNVR), 141–179 (GHGG…QVTS), 182–221 (GHTG…CKQT), 224–263 (GHES…ELAM), 268–307 (NIIC…RSGI), and 310–340 (GHDN…RVWN).

Belongs to the WD repeat G protein beta family. In terms of assembly, g proteins are composed of 3 units, alpha, beta and gamma. Expressed in the brain neuropil and cortex, and the thoracic ganglion (at protein level). Expression detected in eye at protein level but not at mRNA level, suggesting cross reactivity of antibodies to the similar Gbeta76C protein.

In terms of biological role, guanine nucleotide-binding proteins (G proteins) are involved as a modulator or transducer in various transmembrane signaling systems. The beta and gamma chains are required for the GTPase activity, for replacement of GDP by GTP, and for G protein-effector interaction. The sequence is that of Guanine nucleotide-binding protein subunit beta-1 (Gbeta13F) from Drosophila melanogaster (Fruit fly).